Reading from the N-terminus, the 90-residue chain is Cell division topological specificity factor (90 aa).

Residues 1–21 are disordered; the sequence is MAGFWSKLFSSEEKPSSAQTA. Residues 10-21 show a composition bias toward basic and acidic residues; the sequence is SSEEKPSSAQTA.

This sequence belongs to the MinE family.

Functionally, prevents the cell division inhibition by proteins MinC and MinD at internal division sites while permitting inhibition at polar sites. This ensures cell division at the proper site by restricting the formation of a division septum at the midpoint of the long axis of the cell. In Acinetobacter baumannii (strain AB307-0294), this protein is Cell division topological specificity factor.